A 262-amino-acid polypeptide reads, in one-letter code: 5'-nucleotidase SurE (262 aa).

Residues aspartate 8, aspartate 9, serine 39, and asparagine 95 each coordinate a divalent metal cation.

This sequence belongs to the SurE nucleotidase family. It depends on a divalent metal cation as a cofactor.

It is found in the cytoplasm. It catalyses the reaction a ribonucleoside 5'-phosphate + H2O = a ribonucleoside + phosphate. In terms of biological role, nucleotidase that shows phosphatase activity on nucleoside 5'-monophosphates. The polypeptide is 5'-nucleotidase SurE (Methanothermobacter thermautotrophicus (strain ATCC 29096 / DSM 1053 / JCM 10044 / NBRC 100330 / Delta H) (Methanobacterium thermoautotrophicum)).